The chain runs to 103 residues: Small ribosomal subunit protein uS10 (103 aa).

The protein belongs to the universal ribosomal protein uS10 family. As to quaternary structure, part of the 30S ribosomal subunit.

Functionally, involved in the binding of tRNA to the ribosomes. The chain is Small ribosomal subunit protein uS10 from Chromobacterium violaceum (strain ATCC 12472 / DSM 30191 / JCM 1249 / CCUG 213 / NBRC 12614 / NCIMB 9131 / NCTC 9757 / MK).